The primary structure comprises 421 residues: Truncated surface protein (421 aa).

Positions 1–31 are cleaved as a signal peptide; that stretch reads MRAKGTRKNYQHLWRWGTMLLGMLMICSAAE. Cysteine 53 and cysteine 73 are oxidised to a cystine. N-linked (GlcNAc...) asparagine; by host glycosylation is found at asparagine 87, asparagine 97, asparagine 129, asparagine 135, asparagine 140, asparagine 151, asparagine 155, asparagine 183, asparagine 192, asparagine 229, asparagine 236, asparagine 257, asparagine 271, asparagine 284, asparagine 290, asparagine 296, asparagine 326, asparagine 333, asparagine 349, and asparagine 355. Cystine bridges form between cysteine 118/cysteine 200, cysteine 125/cysteine 191, cysteine 130/cysteine 152, cysteine 213/cysteine 242, and cysteine 223/cysteine 234. A V1 region spans residues 130–151; it reads CTDLTNATYANGSSEERGEIRN. The interval 152–191 is V2; it reads CSFNVTTIIRNKIQKEYALFYRLDIVPIDKDNTSYTLINC. Residues 291-324 form a V3 region; it reads CTRPNNNTKKGIAIGPGRTLYAREKIIGDIRQAH. An intrachain disulfide couples cysteine 291 to cysteine 325. The tract at residues 357–367 is CD4-binding loop; that stretch reads SSGGDPEIVMH. A disulfide bridge links cysteine 378 with cysteine 410. The interval 378–410 is V4; it reads CKTTQLFNSTWLFNSTWNDTERSDNNETIIIPC. N-linked (GlcNAc...) asparagine; by host glycans are attached at residues asparagine 385, asparagine 391, asparagine 395, and asparagine 403.

The protein resides in the virion membrane. This Human immunodeficiency virus type 1 group M subtype B (isolate NY5) (HIV-1) protein is Truncated surface protein (env).